A 336-amino-acid polypeptide reads, in one-letter code: Anthranilate phosphoribosyltransferase (336 aa).

5-phospho-alpha-D-ribose 1-diphosphate contacts are provided by residues G82, 85–86, T90, 92–95, 110–118, and S122; these read GD, NIST, and KHGNRFASG. G82 lines the anthranilate pocket. Mg(2+) is bound at residue S94. N113 lines the anthranilate pocket. Residue R168 coordinates anthranilate. 2 residues coordinate Mg(2+): D227 and E228.

It belongs to the anthranilate phosphoribosyltransferase family. As to quaternary structure, homodimer. Mg(2+) serves as cofactor.

The catalysed reaction is N-(5-phospho-beta-D-ribosyl)anthranilate + diphosphate = 5-phospho-alpha-D-ribose 1-diphosphate + anthranilate. It functions in the pathway amino-acid biosynthesis; L-tryptophan biosynthesis; L-tryptophan from chorismate: step 2/5. Catalyzes the transfer of the phosphoribosyl group of 5-phosphorylribose-1-pyrophosphate (PRPP) to anthranilate to yield N-(5'-phosphoribosyl)-anthranilate (PRA). This is Anthranilate phosphoribosyltransferase from Desulfitobacterium hafniense (strain Y51).